The following is a 249-amino-acid chain: 5'-nucleotidase SurE (249 aa).

Residues aspartate 8, aspartate 9, serine 39, and asparagine 91 each coordinate a divalent metal cation.

This sequence belongs to the SurE nucleotidase family. A divalent metal cation serves as cofactor.

The protein localises to the cytoplasm. The catalysed reaction is a ribonucleoside 5'-phosphate + H2O = a ribonucleoside + phosphate. Nucleotidase that shows phosphatase activity on nucleoside 5'-monophosphates. The polypeptide is 5'-nucleotidase SurE (Magnetococcus marinus (strain ATCC BAA-1437 / JCM 17883 / MC-1)).